Reading from the N-terminus, the 433-residue chain is Pyrimidine-nucleoside phosphorylase (433 aa).

81–83 (KHS) contacts phosphate. Residues Gly88 and Thr90 each contribute to the K(+) site. Residues Thr92, 108-110 (KMS), and Thr120 contribute to the phosphate site. Residues Arg168 and Lys187 each coordinate substrate. Residues Leu243, Ala246, and Glu255 each coordinate K(+).

It belongs to the thymidine/pyrimidine-nucleoside phosphorylase family. As to quaternary structure, homodimer. K(+) serves as cofactor.

The catalysed reaction is uridine + phosphate = alpha-D-ribose 1-phosphate + uracil. It carries out the reaction thymidine + phosphate = 2-deoxy-alpha-D-ribose 1-phosphate + thymine. It catalyses the reaction 2'-deoxyuridine + phosphate = 2-deoxy-alpha-D-ribose 1-phosphate + uracil. Catalyzes phosphorolysis of the pyrimidine nucleosides uridine, thymidine and 2'-deoxyuridine with the formation of the corresponding pyrimidine base and ribose-1-phosphate. The polypeptide is Pyrimidine-nucleoside phosphorylase (pdp) (Staphylococcus epidermidis (strain ATCC 35984 / DSM 28319 / BCRC 17069 / CCUG 31568 / BM 3577 / RP62A)).